The chain runs to 324 residues: uncharacterized protein (324 aa).

In terms of domain architecture, HTH lysR-type spans 6–63 (LKYRELKIISVIAASENISHAATVLGIAQANVSKYLADFESKVGLKVFDRTTRQLMLT). A DNA-binding region (H-T-H motif) is located at residues 23-42 (ISHAATVLGIAQANVSKYLA).

The protein belongs to the LysR transcriptional regulatory family.

This is an uncharacterized protein from Escherichia coli (strain K12).